The following is a 252-amino-acid chain: Carbonic anhydrase (252 aa).

The N-terminal stretch at 1-26 is a signal peptide; it reads MPRFPRTLPRLTAVLLLACTAFSAAA. The region spanning 31 to 252 is the Alpha-carbonic anhydrase domain; sequence THWGYTGHDS…QPLNARVVIE (222 aa). Cys54 and Cys207 are oxidised to a cystine. His92 serves as the catalytic Proton acceptor. Zn(2+)-binding residues include His118, His120, and His137. 203–204 contributes to the substrate binding site; sequence TT.

Belongs to the alpha-carbonic anhydrase family. In terms of assembly, homodimer. Zn(2+) is required as a cofactor.

The protein resides in the periplasm. The catalysed reaction is hydrogencarbonate + H(+) = CO2 + H2O. In terms of biological role, reversible hydration of carbon dioxide. This chain is Carbonic anhydrase (cah), found in Neisseria gonorrhoeae.